The following is a 415-amino-acid chain: 3-isopropylmalate dehydratase large subunit (415 aa).

Positions 295, 353, and 356 each coordinate [4Fe-4S] cluster.

It belongs to the aconitase/IPM isomerase family. LeuC type 2 subfamily. Heterodimer of LeuC and LeuD. Requires [4Fe-4S] cluster as cofactor.

It carries out the reaction (2R,3S)-3-isopropylmalate = (2S)-2-isopropylmalate. Its pathway is amino-acid biosynthesis; L-leucine biosynthesis; L-leucine from 3-methyl-2-oxobutanoate: step 2/4. In terms of biological role, catalyzes the isomerization between 2-isopropylmalate and 3-isopropylmalate, via the formation of 2-isopropylmaleate. The sequence is that of 3-isopropylmalate dehydratase large subunit from Pyrobaculum arsenaticum (strain DSM 13514 / JCM 11321 / PZ6).